The primary structure comprises 366 residues: tRNA/tmRNA (uracil-C(5))-methyltransferase (366 aa).

S-adenosyl-L-methionine-binding residues include Gln190, Tyr218, Asn223, Glu239, and Asp299. The Nucleophile role is filled by Cys324. Glu358 serves as the catalytic Proton acceptor.

This sequence belongs to the class I-like SAM-binding methyltransferase superfamily. RNA M5U methyltransferase family. TrmA subfamily.

It carries out the reaction uridine(54) in tRNA + S-adenosyl-L-methionine = 5-methyluridine(54) in tRNA + S-adenosyl-L-homocysteine + H(+). The enzyme catalyses uridine(341) in tmRNA + S-adenosyl-L-methionine = 5-methyluridine(341) in tmRNA + S-adenosyl-L-homocysteine + H(+). Functionally, dual-specificity methyltransferase that catalyzes the formation of 5-methyluridine at position 54 (m5U54) in all tRNAs, and that of position 341 (m5U341) in tmRNA (transfer-mRNA). This chain is tRNA/tmRNA (uracil-C(5))-methyltransferase, found in Salmonella arizonae (strain ATCC BAA-731 / CDC346-86 / RSK2980).